We begin with the raw amino-acid sequence, 408 residues long: MKVSSAIALLLPVVAARFVDSAFEQDHVQLHPEQAAAEQFLIELSPGETRWVTEDEKWELRRNGQRFMDITDNRDLGLASAQSATTGPARVFPPNVTLDEEVFPLLANLSKGELQTHLEKLTSFHTRYYRSEHGRASSNWLLGQVKKTVGEAGGFKHGITVKPFKHPWGQNSVIARIPGQTNRTIVVGAHQDSINLFLPSVLSAPGADDDGSGTVTILEALRVLLQSEAVLAGKAANTIEFHWYSAEEGGLLGSQAIFNTYEKASRDVRAMLQQDMTGFVQRTLDAGEVESVGVIVDYVDPGLTAFIKKVITAYCDIPFIETKCGYACSDHASASKAGYPSAFVIESAFERSDDHIHTSDDLIKYLSFDHMLQHARLTLAFVYELAFADFDKLDKAAAVSVAPEMGDL.

Residues 1–16 (MKVSSAIALLLPVVAA) form the signal peptide. Positions 17–89 (RFVDSAFEQD…SAQSATTGPA (73 aa)) are excised as a propeptide. N-linked (GlcNAc...) asparagine glycans are attached at residues N95, N108, and N182. The Zn(2+) site is built by H190, D209, E248, and D275. C324 and C328 are oxidised to a cystine. A Zn(2+)-binding site is contributed by H357.

The protein belongs to the peptidase M28 family. M28E subfamily. Monomer. It depends on Zn(2+) as a cofactor.

It localises to the secreted. Functionally, extracellular aminopeptidase that allows assimilation of proteinaceous substrates. The sequence is that of Leucine aminopeptidase 1 (LAP1) from Grosmannia clavigera (strain kw1407 / UAMH 11150) (Blue stain fungus).